Consider the following 515-residue polypeptide: Cytoplasmic dynein 1 light intermediate chain 1 (515 aa).

The span at 1-24 (MAAVGRAGSFGSSSASGAANNASA) shows a compositional bias: low complexity. Residues 1 to 34 (MAAVGRAGSFGSSSASGAANNASAELRAGGEEDD) form a disordered region. Residue 64–71 (GEDGAGKT) coordinates ATP. 2 disordered regions span residues 370–424 (QSQL…DPNM) and 445–515 (KTGS…GEAS). Polar residues predominate over residues 397–409 (RTPNRSVTSNVAS). Residues 448–468 (SPGGPGGVGGSPGGGSAGGTG) show a composition bias toward gly residues. A compositionally biased stretch (basic and acidic residues) spans 490 to 499 (ELDRISRKPE). The span at 502-515 (SPTSPTSPTEGEAS) shows a compositional bias: polar residues.

The protein belongs to the dynein light intermediate chain family. As to quaternary structure, homodimer. The cytoplasmic dynein 1 complex consists of two catalytic heavy chains (HCs) and a number of non-catalytic subunits presented by intermediate chains (ICs). Phosphorylated.

It localises to the cytoplasm. Its subcellular location is the cytoskeleton. It is found in the chromosome. The protein localises to the centromere. The protein resides in the kinetochore. It localises to the spindle pole. Its subcellular location is the recycling endosome membrane. Acts as one of several non-catalytic accessory components of the cytoplasmic dynein 1 complex that are thought to be involved in linking dynein to cargos and to adapter proteins that regulate dynein function. Cytoplasmic dynein 1 acts as a motor for the intracellular retrograde motility of vesicles and organelles along microtubules. May play a role in binding dynein to membranous organelles or chromosomes. May regulate the movement of peripheral sorting endosomes along microtubule tracks toward the microtubule organizing center/centrosome, generating the endosomal recycling compartment. This chain is Cytoplasmic dynein 1 light intermediate chain 1 (DYNC1LI1), found in Gallus gallus (Chicken).